The sequence spans 190 residues: Probable nicotinate-nucleotide adenylyltransferase (190 aa).

This sequence belongs to the NadD family.

It catalyses the reaction nicotinate beta-D-ribonucleotide + ATP + H(+) = deamido-NAD(+) + diphosphate. It functions in the pathway cofactor biosynthesis; NAD(+) biosynthesis; deamido-NAD(+) from nicotinate D-ribonucleotide: step 1/1. Functionally, catalyzes the reversible adenylation of nicotinate mononucleotide (NaMN) to nicotinic acid adenine dinucleotide (NaAD). The sequence is that of Probable nicotinate-nucleotide adenylyltransferase from Myxococcus xanthus (strain DK1622).